A 393-amino-acid chain; its full sequence is Cytochrome b (393 aa).

Helical transmembrane passes span 33–53, 77–98, 113–133, and 178–198; these read FGSL…FLAM, WFLR…YLHM, WNIG…GYVL, and FFAI…LHLL. Residues histidine 83 and histidine 97 each contribute to the heme b site. The heme b site is built by histidine 182 and histidine 196. Histidine 201 serves as a coordination point for a ubiquinone. Transmembrane regions (helical) follow at residues 226–246, 288–308, 320–340, and 347–367; these read YKDV…ALFA, LGGV…PFIH, LSQL…WIGG, and FIII…ILMP.

It belongs to the cytochrome b family. The cytochrome bc1 complex contains 3 respiratory subunits (MT-CYB, CYC1 and UQCRFS1), 2 core proteins (UQCRC1 and UQCRC2) and probably 6 low-molecular weight proteins. Heme b serves as cofactor.

Its subcellular location is the mitochondrion inner membrane. In terms of biological role, component of the ubiquinol-cytochrome c reductase complex (complex III or cytochrome b-c1 complex) that is part of the mitochondrial respiratory chain. The b-c1 complex mediates electron transfer from ubiquinol to cytochrome c. Contributes to the generation of a proton gradient across the mitochondrial membrane that is then used for ATP synthesis. In Synbranchus marmoratus (Marbled swamp eel), this protein is Cytochrome b (mt-cyb).